Consider the following 517-residue polypeptide: 2-isopropylmalate synthase (517 aa).

Positions 5-267 constitute a Pyruvate carboxyltransferase domain; that stretch reads VIIFDTTLRD…HTNVRCQEIY (263 aa). Asp14, His202, His204, and Asn238 together coordinate Mn(2+). The interval 392–517 is regulatory domain; that stretch reads RLKCFHVDSS…QRKYIKKNNN (126 aa).

The protein belongs to the alpha-IPM synthase/homocitrate synthase family. LeuA type 1 subfamily. In terms of assembly, homodimer. The cofactor is Mn(2+).

The protein localises to the cytoplasm. It carries out the reaction 3-methyl-2-oxobutanoate + acetyl-CoA + H2O = (2S)-2-isopropylmalate + CoA + H(+). It functions in the pathway amino-acid biosynthesis; L-leucine biosynthesis; L-leucine from 3-methyl-2-oxobutanoate: step 1/4. Catalyzes the condensation of the acetyl group of acetyl-CoA with 3-methyl-2-oxobutanoate (2-ketoisovalerate) to form 3-carboxy-3-hydroxy-4-methylpentanoate (2-isopropylmalate). This chain is 2-isopropylmalate synthase, found in Blochmanniella pennsylvanica (strain BPEN).